A 219-amino-acid polypeptide reads, in one-letter code: 2-C-methyl-D-erythritol 4-phosphate cytidylyltransferase (219 aa).

The protein belongs to the IspD/TarI cytidylyltransferase family. IspD subfamily.

It catalyses the reaction 2-C-methyl-D-erythritol 4-phosphate + CTP + H(+) = 4-CDP-2-C-methyl-D-erythritol + diphosphate. The protein operates within isoprenoid biosynthesis; isopentenyl diphosphate biosynthesis via DXP pathway; isopentenyl diphosphate from 1-deoxy-D-xylulose 5-phosphate: step 2/6. In terms of biological role, catalyzes the formation of 4-diphosphocytidyl-2-C-methyl-D-erythritol from CTP and 2-C-methyl-D-erythritol 4-phosphate (MEP). In Bacteroides fragilis (strain ATCC 25285 / DSM 2151 / CCUG 4856 / JCM 11019 / LMG 10263 / NCTC 9343 / Onslow / VPI 2553 / EN-2), this protein is 2-C-methyl-D-erythritol 4-phosphate cytidylyltransferase.